A 591-amino-acid polypeptide reads, in one-letter code: L-fucose isomerase (591 aa).

Active-site proton acceptor residues include Glu-338 and Asp-362. Residues Glu-338, Asp-362, and His-529 each contribute to the Mn(2+) site.

Belongs to the L-fucose isomerase family. Requires Mn(2+) as cofactor.

The protein resides in the cytoplasm. The catalysed reaction is L-fucose = L-fuculose. It functions in the pathway carbohydrate degradation; L-fucose degradation; L-lactaldehyde and glycerone phosphate from L-fucose: step 1/3. Functionally, converts the aldose L-fucose into the corresponding ketose L-fuculose. The sequence is that of L-fucose isomerase from Phocaeicola vulgatus (strain ATCC 8482 / DSM 1447 / JCM 5826 / CCUG 4940 / NBRC 14291 / NCTC 11154) (Bacteroides vulgatus).